The sequence spans 366 residues: Photosynthetic reaction center cytochrome c subunit (366 aa).

A signal peptide spans 1-22 (MALAVRISTLTVAVTAAALLAG). C23 carries N-palmitoyl cysteine lipidation. The S-diacylglycerol cysteine moiety is linked to residue C23. Heme is bound by residues M94, C107, C110, H111, M129, H143, C151, C154, H155, M238, C249, C252, H253, C309, C312, and H313.

As to quaternary structure, component of the photosynthetic reaction center composed of protein subunits L (PufL), M (PufM), H (PuhA) and cytochrome C (PufC). The reaction center interacts with light-harvesting antenna complex LH1. Binds 4 heme groups per subunit.

The protein resides in the cellular chromatophore membrane. Functionally, the reaction center of purple bacteria contains a tightly bound cytochrome molecule which re-reduces the photo oxidized primary electron donor. The protein is Photosynthetic reaction center cytochrome c subunit (pufC) of Rubrivivax gelatinosus (strain NBRC 100245 / IL144).